The chain runs to 274 residues: Large ribosomal subunit protein uL2cz/uL2cy (274 aa).

Disordered stretches follow at residues 1–22 (MAIHLYKTSTPSTRNGAVDSQV) and 225–274 (PVDH…RRSK).

Belongs to the universal ribosomal protein uL2 family. As to quaternary structure, part of the 50S ribosomal subunit.

It is found in the plastid. It localises to the chloroplast. The sequence is that of Large ribosomal subunit protein uL2cz/uL2cy (rpl2-A) from Nasturtium officinale (Watercress).